A 345-amino-acid polypeptide reads, in one-letter code: UDP-3-O-acylglucosamine N-acyltransferase (345 aa).

The active-site Proton acceptor is H248.

This sequence belongs to the transferase hexapeptide repeat family. LpxD subfamily. As to quaternary structure, homotrimer.

It catalyses the reaction a UDP-3-O-[(3R)-3-hydroxyacyl]-alpha-D-glucosamine + a (3R)-hydroxyacyl-[ACP] = a UDP-2-N,3-O-bis[(3R)-3-hydroxyacyl]-alpha-D-glucosamine + holo-[ACP] + H(+). It participates in bacterial outer membrane biogenesis; LPS lipid A biosynthesis. In terms of biological role, catalyzes the N-acylation of UDP-3-O-acylglucosamine using 3-hydroxyacyl-ACP as the acyl donor. Is involved in the biosynthesis of lipid A, a phosphorylated glycolipid that anchors the lipopolysaccharide to the outer membrane of the cell. The protein is UDP-3-O-acylglucosamine N-acyltransferase of Trichodesmium erythraeum (strain IMS101).